Reading from the N-terminus, the 446-residue chain is Exodeoxyribonuclease 7 large subunit (446 aa).

The protein belongs to the XseA family. In terms of assembly, heterooligomer composed of large and small subunits.

Its subcellular location is the cytoplasm. It catalyses the reaction Exonucleolytic cleavage in either 5'- to 3'- or 3'- to 5'-direction to yield nucleoside 5'-phosphates.. Functionally, bidirectionally degrades single-stranded DNA into large acid-insoluble oligonucleotides, which are then degraded further into small acid-soluble oligonucleotides. This chain is Exodeoxyribonuclease 7 large subunit, found in Streptococcus thermophilus (strain CNRZ 1066).